Reading from the N-terminus, the 146-residue chain is uncharacterized protein (146 aa).

5 helical membrane passes run 5 to 27, 32 to 49, 61 to 80, 90 to 108, and 120 to 142; these read GAMV…YGLA, FVYV…YIIL, LAVM…FFSG, SLGL…ARVF, and FFLK…MLFL.

It is found in the cell membrane. This is an uncharacterized protein from Archaeoglobus fulgidus (strain ATCC 49558 / DSM 4304 / JCM 9628 / NBRC 100126 / VC-16).